Here is a 458-residue protein sequence, read N- to C-terminus: MAKSPRRVAGRRLLLPLLCLFFQGATAILFAIFVRYDQQTDAALWHGGNHSNADNEFYFRYPSFQDVHAMVFVGFGFLMVFLQRYGYSSLGFTFLLGAFALQWATLVQGFLHSFHGGHIHVGMESLINADFCAGAVLISFGAVLGKTGPAQLLLMALLEVALFGLNEFVLLCLLGVRDAGGSMTIHTFGAYFGLVLSRVLYRPHLEKSQHRQGSVYHSDLFAMIGTIFLWIFWPSFNSALTSRGDGQPRTALNTYYSLTASTLSTFALSALVGKDGRLDMVHVQNAALAGGVVVGTASEMMLTPFGALAAGCLAGAISTLGYKFFTPILESKLKIQDTCGVHNLHGMPGVLGALLGALMTGLTTHEAYGDGLQSVFPLIAEGQRSATSQAIYQLFGLSVTLLFASAGGVLGGLLLKLPFLDAPPDSQCYEDQMCWEVPGEHGYEAQEALRVEEPDTEA.

Residues 1–13 (MAKSPRRVAGRRL) are Cytoplasmic-facing. The helical transmembrane segment at 14 to 34 (LLPLLCLFFQGATAILFAIFV) threads the bilayer. At 35 to 61 (RYDQQTDAALWHGGNHSNADNEFYFRY) the chain is on the extracellular side. An N-linked (GlcNAc...) asparagine glycan is attached at Asn-49. A helical membrane pass occupies residues 62-82 (PSFQDVHAMVFVGFGFLMVFL). At 83–86 (QRYG) the chain is on the cytoplasmic side. Residues 87 to 107 (YSSLGFTFLLGAFALQWATLV) form a helical membrane-spanning segment. At 108–124 (QGFLHSFHGGHIHVGME) the chain is on the extracellular side. Residues 125–145 (SLINADFCAGAVLISFGAVLG) form a helical membrane-spanning segment. At 146–149 (KTGP) the chain is on the cytoplasmic side. The helical transmembrane segment at 150–170 (AQLLLMALLEVALFGLNEFVL) threads the bilayer. Topologically, residues 171-178 (LCLLGVRD) are extracellular. A helical membrane pass occupies residues 179-201 (AGGSMTIHTFGAYFGLVLSRVLY). The Cytoplasmic portion of the chain corresponds to 202–219 (RPHLEKSQHRQGSVYHSD). A helical membrane pass occupies residues 220-240 (LFAMIGTIFLWIFWPSFNSAL). Over 241-251 (TSRGDGQPRTA) the chain is Extracellular. The chain crosses the membrane as a helical span at residues 252 to 272 (LNTYYSLTASTLSTFALSALV). The Cytoplasmic portion of the chain corresponds to 273 to 282 (GKDGRLDMVH). The helical transmembrane segment at 283-303 (VQNAALAGGVVVGTASEMMLT) threads the bilayer. Residue Pro-304 is a topological domain, extracellular. A helical transmembrane segment spans residues 305–325 (FGALAAGCLAGAISTLGYKFF). Residues 326-346 (TPILESKLKIQDTCGVHNLHG) are Cytoplasmic-facing. Residues 347–367 (MPGVLGALLGALMTGLTTHEA) traverse the membrane as a helical segment. Over 368–393 (YGDGLQSVFPLIAEGQRSATSQAIYQ) the chain is Extracellular. The chain crosses the membrane as a helical span at residues 394–414 (LFGLSVTLLFASAGGVLGGLL). Topologically, residues 415 to 458 (LKLPFLDAPPDSQCYEDQMCWEVPGEHGYEAQEALRVEEPDTEA) are cytoplasmic. The segment at 416–424 (KLPFLDAPP) is interaction with ANK3. A Basolateral sorting signal motif is present at residues 429-432 (YEDQ).

This sequence belongs to the ammonium transporter (TC 2.A.49) family. Rh subfamily. Interacts (via C-terminus) with ANK2 and ANK3; required for targeting to the basolateral membrane. In terms of processing, N-glycosylated.

The protein resides in the cell membrane. The protein localises to the basolateral cell membrane. The catalysed reaction is NH4(+)(in) = NH4(+)(out). It carries out the reaction methylamine(out) = methylamine(in). The enzyme catalyses CO2(out) = CO2(in). Its function is as follows. Ammonium transporter involved in the maintenance of acid-base homeostasis. Transports ammonium and its related derivative methylammonium across the basolateral plasma membrane of epithelial cells likely contributing to renal transepithelial ammonia transport and ammonia metabolism. May transport either NH4(+) or NH3 ammonia species predominantly mediating an electrogenic NH4(+) transport. May act as a CO2 channel providing for renal acid secretion. The chain is Ammonium transporter Rh type B (RHBG) from Oryctolagus cuniculus (Rabbit).